A 489-amino-acid polypeptide reads, in one-letter code: NADH-ubiquinone oxidoreductase chain 2 (489 aa).

The next 13 helical transmembrane spans lie at 9 to 29 (LFPE…GVVF), 47 to 67 (LGLL…PLAV), 80 to 100 (FTYF…VMCL), 114 to 134 (IVLI…YDLI), 168 to 188 (FILG…IYGF), 216 to 236 (IFMG…AVPF), 248 to 268 (PTIV…ANML), 280 to 300 (WQQL…LAAM), 309 to 329 (LAYS…CGTI), 335 to 355 (LLIG…IVLA), 376 to 396 (ILAI…PLAG), 401 to 421 (FYLF…IGVV), and 459 to 479 (LAIT…LFLV).

The protein belongs to the complex I subunit 2 family.

Its subcellular location is the mitochondrion inner membrane. The catalysed reaction is a ubiquinone + NADH + 5 H(+)(in) = a ubiquinol + NAD(+) + 4 H(+)(out). Its function is as follows. Core subunit of the mitochondrial membrane respiratory chain NADH dehydrogenase (Complex I) that is believed to belong to the minimal assembly required for catalysis. Complex I functions in the transfer of electrons from NADH to the respiratory chain. The immediate electron acceptor for the enzyme is believed to be ubiquinone. The protein is NADH-ubiquinone oxidoreductase chain 2 (ND2) of Marchantia polymorpha (Common liverwort).